The chain runs to 203 residues: Shikimate kinase (203 aa).

Position 32-37 (Gly-32–Ala-37) interacts with ATP. Thr-36 serves as a coordination point for Mg(2+). Residues Asp-54, Arg-78, and Gly-100 each contribute to the substrate site. An ATP-binding site is contributed by Arg-138. Substrate is bound at residue Arg-157.

This sequence belongs to the shikimate kinase family. As to quaternary structure, monomer. It depends on Mg(2+) as a cofactor.

It is found in the cytoplasm. It carries out the reaction shikimate + ATP = 3-phosphoshikimate + ADP + H(+). It functions in the pathway metabolic intermediate biosynthesis; chorismate biosynthesis; chorismate from D-erythrose 4-phosphate and phosphoenolpyruvate: step 5/7. Catalyzes the specific phosphorylation of the 3-hydroxyl group of shikimic acid using ATP as a cosubstrate. The chain is Shikimate kinase from Mesorhizobium japonicum (strain LMG 29417 / CECT 9101 / MAFF 303099) (Mesorhizobium loti (strain MAFF 303099)).